Consider the following 127-residue polypeptide: MATVSRKRKKVKVTPEGVVHIKASFNNVMVTITDVQGNTVSWSSAGKNGFRGSKKNTPYASQVTSEAAAKEAFDLGMRNVQVFIKGPGAGRDAAIRALQGAGLEVRSIRDITPLPHNGCRPPKRRRV.

It belongs to the universal ribosomal protein uS11 family. As to quaternary structure, part of the 30S ribosomal subunit. Interacts with proteins S7 and S18. Binds to IF-3.

Its function is as follows. Located on the platform of the 30S subunit, it bridges several disparate RNA helices of the 16S rRNA. Forms part of the Shine-Dalgarno cleft in the 70S ribosome. The protein is Small ribosomal subunit protein uS11 of Chlorobium limicola (strain DSM 245 / NBRC 103803 / 6330).